Consider the following 738-residue polypeptide: Multifunctional procollagen lysine hydroxylase and glycosyltransferase LH3 (738 aa).

Residues 1–24 (MTSSGPGPRFLLLLPLLLPPAASA) form the signal peptide. Residues 25 to 290 (SDRPRGRDPV…FCNQDRRTLP (266 aa)) form a required for glycosyltransferase activity region. 44–46 (VAT) contacts UDP. N-linked (GlcNAc...) asparagine glycosylation occurs at N63. Mn(2+) contacts are provided by D112, D115, and H253. Residue 112–114 (DSY) coordinates UDP. 256-259 (GPTK) lines the UDP pocket. Disulfide bonds link C279–C282 and C379–C385. The accessory region stretch occupies residues 295–520 (PPRVFLAVFV…EFGRLLATSR (226 aa)). N548 is a glycosylation site (N-linked (GlcNAc...) asparagine). C563 and C698 form a disulfide bridge. R599 and Y656 together coordinate 2-oxoglutarate. Residues 647 to 738 (RAVMNFVVRY…RYIMVSFVDP (92 aa)) form the Fe2OG dioxygenase domain. H667 and D669 together coordinate Fe cation. An important for dimerization region spans residues 672 to 715 (TFTLNVALNHKGLDYEGGGCRFLRYDCVISSPRKGWALLHPGRL). N676 provides a ligand contact to 2-oxoglutarate. H719 serves as a coordination point for Fe cation. R729 is a binding site for 2-oxoglutarate.

As to quaternary structure, homodimer. Fe(2+) serves as cofactor. Requires L-ascorbate as cofactor. It depends on Mn(2+) as a cofactor.

The protein resides in the rough endoplasmic reticulum. The protein localises to the endoplasmic reticulum lumen. Its subcellular location is the endoplasmic reticulum membrane. It is found in the secreted. It localises to the extracellular space. It carries out the reaction L-lysyl-[collagen] + 2-oxoglutarate + O2 = (5R)-5-hydroxy-L-lysyl-[collagen] + succinate + CO2. The enzyme catalyses (5R)-5-hydroxy-L-lysyl-[collagen] + UDP-alpha-D-galactose = (5R)-5-O-(beta-D-galactosyl)-5-hydroxy-L-lysyl-[collagen] + UDP + H(+). It catalyses the reaction (5R)-5-O-(beta-D-galactosyl)-5-hydroxy-L-lysyl-[collagen] + UDP-alpha-D-glucose = (5R)-5-O-[alpha-D-glucosyl-(1-&gt;2)-beta-D-galactosyl]-5-hydroxy-L-lysyl-[collagen] + UDP + H(+). In terms of biological role, multifunctional enzyme that catalyzes a series of post-translational modifications on Lys residues in procollagen. Plays a redundant role in catalyzing the formation of hydroxylysine residues in -Xaa-Lys-Gly- sequences in collagens. Plays a redundant role in catalyzing the transfer of galactose onto hydroxylysine groups, giving rise to galactosyl 5-hydroxylysine. Has an essential role by catalyzing the subsequent transfer of glucose moieties, giving rise to 1,2-glucosylgalactosyl-5-hydroxylysine residues. Catalyzes hydroxylation and glycosylation of Lys residues in the MBL1 collagen-like domain, giving rise to hydroxylysine and 1,2-glucosylgalactosyl-5-hydroxylysine residues. Catalyzes hydroxylation and glycosylation of Lys residues in the ADIPOQ collagen-like domain, giving rise to hydroxylysine and 1,2-glucosylgalactosyl-5-hydroxylysine residues. Essential for normal biosynthesis and secretion of type IV collagens. Essential for normal formation of basement membranes. The polypeptide is Multifunctional procollagen lysine hydroxylase and glycosyltransferase LH3 (PLOD3) (Pongo abelii (Sumatran orangutan)).